Consider the following 263-residue polypeptide: Lysine 5,6-aminomutase beta subunit (263 aa).

Residues 120–259 (EVVMVGASTG…TFILKEMVQR (140 aa)) form the B12-binding domain. Adenosylcob(III)alamin-binding positions include 130-136 (TDAHTVG) and His133. The residue at position 144 (Lys144) is an N6-(pyridoxal phosphate)lysine. Adenosylcob(III)alamin is bound by residues 185 to 192 (LVSQTVTQ), 219 to 223 (IAGGA), and 239 to 244 (FGPGKY).

This sequence belongs to the KamE family. In terms of assembly, heterotetramer of 2 alpha and 2 beta subunits. Adenosylcob(III)alamin serves as cofactor. Pyridoxal 5'-phosphate is required as a cofactor.

The enzyme catalyses (3S)-3,6-diaminohexanoate = (3S,5S)-3,5-diaminohexanoate. It catalyses the reaction D-lysine = (2R,5S)-2,5-diaminohexanoate. The protein operates within amino-acid degradation; L-lysine degradation via acetate pathway. Catalyzes the migration of the L-beta-lysine and D-lysine epsilon amino group to the delta carbon to produce 3,5-diaminohexanoate and 2,5-diaminohexanoate, respectively. The protein is Lysine 5,6-aminomutase beta subunit of Fusobacterium nucleatum subsp. nucleatum (strain ATCC 25586 / DSM 15643 / BCRC 10681 / CIP 101130 / JCM 8532 / KCTC 2640 / LMG 13131 / VPI 4355).